The following is a 187-amino-acid chain: Dihydrofolate reductase (187 aa).

Positions 4–185 (PLNCIVAVSQ…IKYKFEVYEK (182 aa)) constitute a DHFR domain. Residues Ala-10 and 16–22 (GIGKNGD) each bind NADP(+). 31-36 (EFKYFQ) serves as a coordination point for substrate. Residue Lys-33 is modified to N6-acetyllysine; alternate. Position 33 is an N6-succinyllysine; alternate (Lys-33). 55–57 (RKT) serves as a coordination point for NADP(+). Residue Arg-71 participates in substrate binding. NADP(+) is bound by residues 77–79 (SRE) and 117–124 (GGSSVYQE).

Belongs to the dihydrofolate reductase family. In terms of assembly, homodimer.

The protein resides in the mitochondrion. It localises to the cytoplasm. The enzyme catalyses (6S)-5,6,7,8-tetrahydrofolate + NADP(+) = 7,8-dihydrofolate + NADPH + H(+). The protein operates within cofactor biosynthesis; tetrahydrofolate biosynthesis; 5,6,7,8-tetrahydrofolate from 7,8-dihydrofolate: step 1/1. In terms of biological role, key enzyme in folate metabolism. Contributes to the de novo mitochondrial thymidylate biosynthesis pathway. Catalyzes an essential reaction for de novo glycine and purine synthesis, and for DNA precursor synthesis. Binds its own mRNA. The polypeptide is Dihydrofolate reductase (Dhfr) (Rattus norvegicus (Rat)).